A 212-amino-acid chain; its full sequence is Fibroblast growth factor 8b (212 aa).

A signal peptide spans 1 to 27 (MRLKSSRLGYLFLQFMTLCFYTQMTMQ). An N-linked (GlcNAc...) asparagine glycan is attached at Asn139.

It belongs to the heparin-binding growth factors family.

It is found in the secreted. Its function is as follows. May act as signaling molecule during development of the midbrain-hindbrain boundary (MHB) organizer, and be involved in patterning of the nervous system. The chain is Fibroblast growth factor 8b (fgf8b) from Danio rerio (Zebrafish).